A 184-amino-acid chain; its full sequence is Luciferin-binding protein (184 aa).

EF-hand domains are found at residues 10 to 45 (YHLR…IAKI), 46 to 81 (AKLS…EEAA), 98 to 133 (MAVI…VGPD), and 134 to 169 (ITDD…FLFG). Ca(2+)-binding residues include Asp111, Asp113, Asp115, Tyr117, Glu122, Asp147, Asn149, Asn151, Gln153, and Glu158.

In terms of biological role, this Ca(2+)-dependent protein binds to luciferin. The luciferin of LBP is capable of reacting with luciferase and O(2) only when calcium is bound. This is Luciferin-binding protein from Renilla reniformis (Sea pansy).